A 222-amino-acid polypeptide reads, in one-letter code: Imidazoleglycerol-phosphate dehydratase (222 aa).

This sequence belongs to the imidazoleglycerol-phosphate dehydratase family.

The catalysed reaction is D-erythro-1-(imidazol-4-yl)glycerol 3-phosphate = 3-(imidazol-4-yl)-2-oxopropyl phosphate + H2O. It functions in the pathway amino-acid biosynthesis; L-histidine biosynthesis; L-histidine from 5-phospho-alpha-D-ribose 1-diphosphate: step 6/9. This is Imidazoleglycerol-phosphate dehydratase (HIS3) from Scheffersomyces stipitis (strain ATCC 58785 / CBS 6054 / NBRC 10063 / NRRL Y-11545) (Yeast).